The following is a 349-amino-acid chain: Phenylalanine--tRNA ligase alpha subunit (349 aa).

Residue Glu-264 participates in Mg(2+) binding.

Belongs to the class-II aminoacyl-tRNA synthetase family. Phe-tRNA synthetase alpha subunit type 1 subfamily. In terms of assembly, tetramer of two alpha and two beta subunits. It depends on Mg(2+) as a cofactor.

The protein localises to the cytoplasm. It catalyses the reaction tRNA(Phe) + L-phenylalanine + ATP = L-phenylalanyl-tRNA(Phe) + AMP + diphosphate + H(+). The chain is Phenylalanine--tRNA ligase alpha subunit from Myxococcus xanthus (strain DK1622).